An 875-amino-acid polypeptide reads, in one-letter code: Alanine--tRNA ligase (875 aa).

4 residues coordinate Zn(2+): His-564, His-568, Cys-666, and His-670.

It belongs to the class-II aminoacyl-tRNA synthetase family. Homotetramer. Zn(2+) serves as cofactor.

It localises to the cytoplasm. The enzyme catalyses tRNA(Ala) + L-alanine + ATP = L-alanyl-tRNA(Ala) + AMP + diphosphate. In terms of biological role, catalyzes the attachment of alanine to tRNA(Ala) in a two-step reaction: alanine is first activated by ATP to form Ala-AMP and then transferred to the acceptor end of tRNA(Ala). Also edits incorrectly charged Ser-tRNA(Ala) and Gly-tRNA(Ala) via its editing domain. This is Alanine--tRNA ligase from Yersinia pseudotuberculosis serotype O:1b (strain IP 31758).